The primary structure comprises 817 residues: MQEHYEPDALERQAQTWWDEHQTFRAREDAPGEPFYCLSMFPYPSGRLHMGHVRNYTIGDVISRYQRMQGRNVLQPMGWDAFGLPAENAAIKHLVPPAKWTYENIAYMRGQLQRLGFGYDWDRELATCRPEYYRWEQWLFTRLVKKGLAYKKTAMVNWDPVDQTVLANEQVIDGKGWRSGAPVERREIPQWFLRITDYAEELLKGLDGLEGWPEQVRTMQRNWIGRSEGVELEFEVPGEAPLTVYTTRPDTLMGVSYVGVAPEHPLAARAAEGDGKLAAFIEACRHTKVSEADMATLEKKGMDTGLKAVHPVTGEPVPVWVANFVLMEYGTGAVMAVPAHDQRDWEFARQYGLPVRQVILPAEEGVAVDLDQAAFTDKGVLIESAQFNGLSSAQAFDAIADFLEKQHKGRRRVNYRLRDWGVSRQRYWGCPIPIINCPDCGPVPVPEEQLPVVLPEDVAFDGVGSPIKRMPEFIDTTCPECGGKAERETDTFDTFFESSWYYARYTCKDADGAMLDERARHWLPVDQYIGGIEHAVLHLLYARFFHKLMRDEGLVDGDEPFTRLLTQGMVLKDGAKMSKSKGNTVDPEALIERYGADTVRLFMMFAAPPELSLEWSDSGVEGAYRFLKRLWKQVHDHVQGGAAPALDKAALNADQQALRRKLHQTLAKVSDDIGRRTTFNTAIAACMELMNELGRFEDKSGQGRAVMQEALETTVLMLSPIVPHIAHALWSELGREGAAVDQPWPVVDESALESDTVELVVQVNGKLRAQIQVPAAAARAAIEEAALADENVQRHIEGKTVVKMVVVPGRLVNVVVK.

The short motif at 42–52 is the 'HIGH' region element; sequence PYPSGRLHMGH. The short motif at 576–580 is the 'KMSKS' region element; the sequence is KMSKS. Position 579 (Lys-579) interacts with ATP.

This sequence belongs to the class-I aminoacyl-tRNA synthetase family.

Its subcellular location is the cytoplasm. The enzyme catalyses tRNA(Leu) + L-leucine + ATP = L-leucyl-tRNA(Leu) + AMP + diphosphate. This Thioalkalivibrio sulfidiphilus (strain HL-EbGR7) protein is Leucine--tRNA ligase.